The primary structure comprises 251 residues: Zinc import ATP-binding protein ZnuC (251 aa).

Residues 5–220 (VSLENVSVSF…PEFISMFGPR (216 aa)) enclose the ABC transporter domain. 37–44 (GPNGAGKS) contributes to the ATP binding site.

The protein belongs to the ABC transporter superfamily. Zinc importer (TC 3.A.1.15.5) family. In terms of assembly, the complex is composed of two ATP-binding proteins (ZnuC), two transmembrane proteins (ZnuB) and a solute-binding protein (ZnuA).

It is found in the cell inner membrane. The enzyme catalyses Zn(2+)(out) + ATP(in) + H2O(in) = Zn(2+)(in) + ADP(in) + phosphate(in) + H(+)(in). Functionally, part of the ABC transporter complex ZnuABC involved in zinc import. Responsible for energy coupling to the transport system. This Shigella flexneri serotype 5b (strain 8401) protein is Zinc import ATP-binding protein ZnuC.